The sequence spans 339 residues: tRNA N6-adenosine threonylcarbamoyltransferase (339 aa).

Fe cation contacts are provided by H114 and H118. Residues 137-141 (VVSGG), D170, G183, D187, and N277 contribute to the substrate site. D305 provides a ligand contact to Fe cation.

It belongs to the KAE1 / TsaD family. It depends on Fe(2+) as a cofactor.

The protein resides in the cytoplasm. The catalysed reaction is L-threonylcarbamoyladenylate + adenosine(37) in tRNA = N(6)-L-threonylcarbamoyladenosine(37) in tRNA + AMP + H(+). Its function is as follows. Required for the formation of a threonylcarbamoyl group on adenosine at position 37 (t(6)A37) in tRNAs that read codons beginning with adenine. Is involved in the transfer of the threonylcarbamoyl moiety of threonylcarbamoyl-AMP (TC-AMP) to the N6 group of A37, together with TsaE and TsaB. TsaD likely plays a direct catalytic role in this reaction. The sequence is that of tRNA N6-adenosine threonylcarbamoyltransferase from Clostridium perfringens (strain SM101 / Type A).